Here is a 179-residue protein sequence, read N- to C-terminus: Large ribosomal subunit protein uL5 (179 aa).

The protein belongs to the universal ribosomal protein uL5 family. As to quaternary structure, part of the 50S ribosomal subunit; part of the 5S rRNA/L5/L18/L25 subcomplex. Contacts the 5S rRNA and the P site tRNA. Forms a bridge to the 30S subunit in the 70S ribosome.

Functionally, this is one of the proteins that bind and probably mediate the attachment of the 5S RNA into the large ribosomal subunit, where it forms part of the central protuberance. In the 70S ribosome it contacts protein S13 of the 30S subunit (bridge B1b), connecting the 2 subunits; this bridge is implicated in subunit movement. Contacts the P site tRNA; the 5S rRNA and some of its associated proteins might help stabilize positioning of ribosome-bound tRNAs. This is Large ribosomal subunit protein uL5 from Rickettsia bellii (strain OSU 85-389).